The sequence spans 340 residues: GTP 3',8-cyclase (340 aa).

One can recognise a Radical SAM core domain in the interval 8-227 (KLGRPIRDLR…TMIEQHFEID (220 aa)). Residue Arg17 participates in GTP binding. Positions 24 and 28 each coordinate [4Fe-4S] cluster. Tyr30 lines the S-adenosyl-L-methionine pocket. Cys31 provides a ligand contact to [4Fe-4S] cluster. Position 71 (Arg71) interacts with GTP. Residue Gly75 coordinates S-adenosyl-L-methionine. Thr102 is a binding site for GTP. An S-adenosyl-L-methionine-binding site is contributed by Ser126. Position 163 (Lys163) interacts with GTP. Met197 is a binding site for S-adenosyl-L-methionine. Cys261 and Cys264 together coordinate [4Fe-4S] cluster. 266-268 (RAR) provides a ligand contact to GTP. Position 278 (Cys278) interacts with [4Fe-4S] cluster.

It belongs to the radical SAM superfamily. MoaA family. In terms of assembly, monomer and homodimer. It depends on [4Fe-4S] cluster as a cofactor.

It catalyses the reaction GTP + AH2 + S-adenosyl-L-methionine = (8S)-3',8-cyclo-7,8-dihydroguanosine 5'-triphosphate + 5'-deoxyadenosine + L-methionine + A + H(+). It participates in cofactor biosynthesis; molybdopterin biosynthesis. Catalyzes the cyclization of GTP to (8S)-3',8-cyclo-7,8-dihydroguanosine 5'-triphosphate. In Staphylococcus aureus (strain Mu3 / ATCC 700698), this protein is GTP 3',8-cyclase.